Reading from the N-terminus, the 1225-residue chain is Cytosolic carboxypeptidase 1 (1225 aa).

The span at 366–392 (DDVVDESDDNEDTDAETEAEAENEDSD) shows a compositional bias: acidic residues. A disordered region spans residues 366–398 (DDVVDESDDNEDTDAETEAEAENEDSDQICKND). The 291-residue stretch at 842–1132 (YPYTYSTLKM…KFCVGLLRLK (291 aa)) folds into the Peptidase M14 domain. Positions 914, 917, and 1011 each coordinate Zn(2+). The Proton donor/acceptor role is filled by Glu1096. Positions 1181–1193 (YSAESNDDVDPDL) are enriched in acidic residues. The disordered stretch occupies residues 1181–1225 (YSAESNDDVDPDLPENIGDFETSTLEEESFSDSEITRTHMSGQST).

It belongs to the peptidase M14 family. Zn(2+) serves as cofactor.

Its subcellular location is the cytoplasm. The protein resides in the cytosol. It localises to the nucleus. The protein localises to the mitochondrion. The catalysed reaction is (L-glutamyl)(n+1)-gamma-L-glutamyl-L-glutamyl-[protein] + H2O = (L-glutamyl)(n)-gamma-L-glutamyl-L-glutamyl-[protein] + L-glutamate. The enzyme catalyses C-terminal L-alpha-aminoacyl-L-glutamyl-L-glutamyl-[tubulin] + H2O = C-terminal L-alpha-aminoacyl-L-glutamyl-[tubulin] + L-glutamate. Metallocarboxypeptidase that mediates protein deglutamylation of tubulin and non-tubulin target proteins. Catalyzes the removal of polyglutamate side chains present on the gamma-carboxyl group of glutamate residues within the C-terminal tail of alpha- and beta-tubulin. Specifically cleaves tubulin long-side-chains, while it is not able to remove the branching point glutamate. Also catalyzes the removal of polyglutamate residues from the carboxy-terminus of alpha-tubulin as well as non-tubulin proteins. The chain is Cytosolic carboxypeptidase 1 (agtpbp1) from Xenopus laevis (African clawed frog).